Reading from the N-terminus, the 429-residue chain is uncharacterized protein (429 aa).

The next 11 helical transmembrane spans lie at 27 to 47, 48 to 68, 78 to 98, 106 to 126, 142 to 162, 198 to 218, 219 to 239, 249 to 269, 288 to 308, 351 to 371, and 399 to 419; these read PFFF…QSIG, GIMT…VSIL, ILLC…YWVF, IFIL…FLAL, ALII…PAII, LLLA…TIVI, AILT…CFYF, VLLS…YFLD, FIVG…FGYL, LILD…IYFI, and FFIS…LIIL.

The protein localises to the cell membrane. Its function is as follows. May function as a transporter. This is an uncharacterized protein from Klebsiella pneumoniae.